A 339-amino-acid chain; its full sequence is Deubiquitinase and deneddylase Dub2 (339 aa).

A helical transmembrane segment spans residues 36 to 56 (IIIALFLIVISCGLILCAYTF). Active-site residues include His203, Asp220, and Cys282.

Belongs to the peptidase C48 family.

It localises to the secreted. The protein resides in the host cell. Its subcellular location is the membrane. In terms of biological role, effector proteins function to alter host cell physiology and promote bacterial survival in host tissues. This protease possesses deubiquitinating and deneddylating activities. This is Deubiquitinase and deneddylase Dub2 (cdu2) from Chlamydia trachomatis serovar L2 (strain ATCC VR-902B / DSM 19102 / 434/Bu).